The following is a 316-amino-acid chain: Ferrochelatase (316 aa).

Positions 188 and 269 each coordinate Fe cation.

This sequence belongs to the ferrochelatase family.

Its subcellular location is the cytoplasm. It catalyses the reaction heme b + 2 H(+) = protoporphyrin IX + Fe(2+). Its pathway is porphyrin-containing compound metabolism; protoheme biosynthesis; protoheme from protoporphyrin-IX: step 1/1. Catalyzes the ferrous insertion into protoporphyrin IX. In Wolinella succinogenes (strain ATCC 29543 / DSM 1740 / CCUG 13145 / JCM 31913 / LMG 7466 / NCTC 11488 / FDC 602W) (Vibrio succinogenes), this protein is Ferrochelatase.